The sequence spans 302 residues: Acetylglutamate kinase (302 aa).

Substrate-binding positions include 68–69, R90, and N195; that span reads GG.

The protein belongs to the acetylglutamate kinase family. ArgB subfamily.

The protein resides in the cytoplasm. The catalysed reaction is N-acetyl-L-glutamate + ATP = N-acetyl-L-glutamyl 5-phosphate + ADP. Its pathway is amino-acid biosynthesis; L-arginine biosynthesis; N(2)-acetyl-L-ornithine from L-glutamate: step 2/4. Catalyzes the ATP-dependent phosphorylation of N-acetyl-L-glutamate. This Marinomonas sp. (strain MWYL1) protein is Acetylglutamate kinase.